Consider the following 361-residue polypeptide: Blue-sensitive opsin (361 aa).

The Extracellular segment spans residues 1 to 43 (MHPPRPTTDLPEDFYIPMALDAPNITALSPFLVPQTHLGSPGL). N-linked (GlcNAc...) asparagine glycosylation occurs at asparagine 24. Residues 44–68 (FRAMAAFMFLLIALGVPINTLTIFC) form a helical membrane-spanning segment. Topologically, residues 69-80 (TARFRKLRSHLN) are cytoplasmic. The helical transmembrane segment at 81-106 (YILVNLALANLLVILVGSTTACYSFS) threads the bilayer. The Extracellular segment spans residues 107 to 120 (QMYFALGPTACKIE). Cysteine 117 and cysteine 194 are oxidised to a cystine. The chain crosses the membrane as a helical span at residues 121-140 (GFAATLGGMVSLWSLAVVAF). The Cytoplasmic portion of the chain corresponds to 141 to 159 (ERFLVICKPLGNFTFRGSH). A helical transmembrane segment spans residues 160–183 (AVLGCVATWVLGFVASAPPLFGWS). At 184–209 (RYIPEGLQCSCGPDWYTTDNKWHNES) the chain is on the extracellular side. A helical transmembrane segment spans residues 210–237 (YVLFLFTFCFGVPLAIIVFSYGRLLITL). Topologically, residues 238–259 (RAVARQQEQSATTQKADREVTK) are cytoplasmic. A helical transmembrane segment spans residues 260–283 (MVVVMVLGFLVCWAPYTAFALWVV). Over 284 to 291 (THRGRSFE) the chain is Extracellular. The helical transmembrane segment at 292 to 316 (VGLASIPSVFSKSSTVYNPVIYVLM) threads the bilayer. The residue at position 303 (lysine 303) is an N6-(retinylidene)lysine. Over 317–361 (NKQFRSCMLKLLFCGRSPFGDDEDVSGSSQATQVSSVSSSHVAPA) the chain is Cytoplasmic. Residues 338 to 361 (DEDVSGSSQATQVSSVSSSHVAPA) are disordered. Low complexity predominate over residues 342–361 (SGSSQATQVSSVSSSHVAPA).

This sequence belongs to the G-protein coupled receptor 1 family. Opsin subfamily. Post-translationally, phosphorylated on some or all of the serine and threonine residues present in the C-terminal region. The color pigments are found in the cone photoreceptor cells.

The protein localises to the membrane. Functionally, visual pigments are the light-absorbing molecules that mediate vision. They consist of an apoprotein, opsin, covalently linked to cis-retinal. The sequence is that of Blue-sensitive opsin from Gallus gallus (Chicken).